A 371-amino-acid polypeptide reads, in one-letter code: Putative glutamate--cysteine ligase 2 (371 aa).

Belongs to the glutamate--cysteine ligase type 2 family. YbdK subfamily.

It carries out the reaction L-cysteine + L-glutamate + ATP = gamma-L-glutamyl-L-cysteine + ADP + phosphate + H(+). Functionally, ATP-dependent carboxylate-amine ligase which exhibits weak glutamate--cysteine ligase activity. The sequence is that of Putative glutamate--cysteine ligase 2 from Burkholderia cenocepacia (strain HI2424).